The primary structure comprises 249 residues: Secretion system apparatus lipoprotein SsaJ (249 aa).

An N-terminal signal peptide occupies residues 1–18 (MKVHRIVFLTVLTFFLTA). Cys-19 is lipidated: N-palmitoyl cysteine. Residue Cys-19 is the site of S-diacylglycerol cysteine attachment. The helical transmembrane segment at 225–245 (LMLSLTGLLLGVGILIGYFCL) threads the bilayer.

This sequence belongs to the YscJ lipoprotein family.

Its subcellular location is the cell outer membrane. In terms of biological role, component of Salmonella pathogenicity island 2 (SPI-2) type III secretion system, required for secretion of some type III-secreted effectors including the SpvB exotoxin. This chain is Secretion system apparatus lipoprotein SsaJ (ssaJ), found in Salmonella typhimurium (strain 14028s / SGSC 2262).